Consider the following 283-residue polypeptide: Putative S-adenosyl-L-methionine-dependent methyltransferase SCO7813 (283 aa).

S-adenosyl-L-methionine-binding positions include Asp-121 and 150 to 151; that span reads DL. The interval 264–283 is disordered; that stretch reads MSTLPQHEDGPGGLISAVRR.

Belongs to the UPF0677 family.

In terms of biological role, exhibits S-adenosyl-L-methionine-dependent methyltransferase activity. This chain is Putative S-adenosyl-L-methionine-dependent methyltransferase SCO7813, found in Streptomyces coelicolor (strain ATCC BAA-471 / A3(2) / M145).